Consider the following 476-residue polypeptide: WASH complex subunit 1 (476 aa).

Positions 1–54 (MTTVAQKHFLEGQTYSVPLIQPDLRREEAVQQVADALQYLQKVSGDIFNRISQR) are required for WASH complex assembly. 2 disordered regions span residues 273 to 412 (SAPS…QGGD) and 427 to 476 (GISG…DWES). Residues 284–296 (TFSTESVEPSQAD) are compositionally biased toward polar residues. Residues 302 to 333 (LLPPPPPPPPPPPPVMPTTVPPPPPLPQPTAP) are compositionally biased toward pro residues. Residues 354–476 (QGAPKEVVNP…GEEDEDDWES (123 aa)) form a VCA region. A WH2 domain is found at 366–388 (GRASLLESIRQAGGIGKANLRSV). Positions 387 to 403 (SVKERKLEKKKQKEQEQ) are enriched in basic and acidic residues. The span at 467 to 476 (GEEDEDDWES) shows a compositional bias: acidic residues.

Belongs to the WASH1 family. Component of the WASH complex.

The protein localises to the early endosome membrane. It is found in the recycling endosome membrane. Its function is as follows. Acts as a nucleation-promoting factor at the surface of endosomes, where it recruits and activates the Arp2/3 complex to induce actin polymerization, playing a key role in the fission of tubules that serve as transport intermediates during endosome sorting. This chain is WASH complex subunit 1, found in Gallus gallus (Chicken).